A 753-amino-acid chain; its full sequence is 5-methyltetrahydropteroyltriglutamate--homocysteine methyltransferase (753 aa).

Residues Arg-17–Lys-20 and Lys-117 contribute to the 5-methyltetrahydropteroyltri-L-glutamate site. Residues Ile-431–Ser-433 and Glu-484 each bind L-homocysteine. L-methionine contacts are provided by residues Ile-431–Ser-433 and Glu-484. 5-methyltetrahydropteroyltri-L-glutamate-binding positions include Arg-515–Cys-516 and Trp-561. Position 599 (Asp-599) interacts with L-homocysteine. Asp-599 serves as a coordination point for L-methionine. Glu-605 contributes to the 5-methyltetrahydropteroyltri-L-glutamate binding site. The Zn(2+) site is built by His-641, Cys-643, and Glu-665. His-694 (proton donor) is an active-site residue. A Zn(2+)-binding site is contributed by Cys-726.

This sequence belongs to the vitamin-B12 independent methionine synthase family. It depends on Zn(2+) as a cofactor.

The enzyme catalyses 5-methyltetrahydropteroyltri-L-glutamate + L-homocysteine = tetrahydropteroyltri-L-glutamate + L-methionine. It participates in amino-acid biosynthesis; L-methionine biosynthesis via de novo pathway; L-methionine from L-homocysteine (MetE route): step 1/1. Functionally, catalyzes the transfer of a methyl group from 5-methyltetrahydrofolate to homocysteine resulting in methionine formation. The chain is 5-methyltetrahydropteroyltriglutamate--homocysteine methyltransferase from Shigella flexneri serotype 5b (strain 8401).